Reading from the N-terminus, the 375-residue chain is Growth/differentiation factor 8 (375 aa).

The first 18 residues, methionine 1–alanine 18, serve as a signal peptide directing secretion. A propeptide spanning residues glycine 19–arginine 266 is cleaved from the precursor. N-linked (GlcNAc...) asparagine glycans are attached at residues asparagine 48 and asparagine 71. Cystine bridges form between cysteine 272–cysteine 282, cysteine 281–cysteine 340, cysteine 309–cysteine 372, and cysteine 313–cysteine 374.

Belongs to the TGF-beta family. As to quaternary structure, homodimer; disulfide-linked. Interacts with WFIKKN2, leading to inhibit its activity. Interacts with FSTL3. In terms of processing, synthesized as large precursor molecule that undergoes proteolytic cleavage to generate an N-terminal propeptide and a disulfide linked C-terminal dimer, which is the biologically active molecule. The circulating form consists of a latent complex of the C-terminal dimer and other proteins, including its propeptide, which maintain the C-terminal dimer in a latent, inactive state. Ligand activation requires additional cleavage of the prodomain by a tolloid-like metalloproteinase.

The protein localises to the secreted. Its function is as follows. Acts specifically as a negative regulator of skeletal muscle growth. This Capra ibex (Ibex) protein is Growth/differentiation factor 8 (MSTN).